The chain runs to 134 residues: Small ribosomal subunit protein uS9c (134 aa).

Residues 105-134 are disordered; the sequence is QGYLTRNPLRKERKKYGLKKARKAPQFSKR. Over residues 115 to 134 the composition is skewed to basic residues; sequence KERKKYGLKKARKAPQFSKR.

It belongs to the universal ribosomal protein uS9 family.

It is found in the plastid. The protein resides in the chloroplast. In Nephroselmis olivacea (Green alga), this protein is Small ribosomal subunit protein uS9c (rps9).